The primary structure comprises 410 residues: Chitin deacetylase 3 (410 aa).

An N-terminal signal peptide occupies residues 1–18 (MYGHLSLSTLSLLAVVAA). Residues 19 to 39 (APFHESWLQPRDSDVSQLFRR) constitute a propeptide that is removed on maturation. N-linked (GlcNAc...) asparagine glycosylation is found at Asn61 and Asn80. The region spanning 124–314 (KVWALSFDDG…KAVANGWSVK (191 aa)) is the NodB homology domain. Catalysis depends on Asp131, which acts as the Proton acceptor. Asp131 contacts acetate. Asp132 lines the Co(2+) pocket. N-linked (GlcNAc...) asparagine glycosylation occurs at Asn149. His183 and His187 together coordinate Co(2+). Position 225 (Tyr225) interacts with acetate. An N-linked (GlcNAc...) asparagine glycan is attached at Asn279. His289 functions as the Proton donor in the catalytic mechanism. N-linked (GlcNAc...) asparagine glycosylation is present at Asn293. Residue Ser385 is the site of GPI-anchor amidated serine attachment. The propeptide at 386–410 (SSWPIANRPSLFVIACGLALAAIMV) is removed in mature form.

This sequence belongs to the polysaccharide deacetylase family. Co(2+) serves as cofactor.

It is found in the cell membrane. The catalysed reaction is [(1-&gt;4)-N-acetyl-beta-D-glucosaminyl](n) + n H2O = chitosan + n acetate. Functionally, hydrolyzes the N-acetamido groups of N-acetyl-D-glucosamine residues in chitin to form chitosan and acetate. Chitosan is required to anchor melanin to the cell wall, for maintenance of cell wall integrity, and for proper cytokinesis. Chitosan offers an advantage during infection as it is less readily detected than chitin by host immunosurveillance mechanisms. The protein is Chitin deacetylase 3 of Cryptococcus neoformans var. neoformans serotype D (strain B-3501A) (Filobasidiella neoformans).